Here is a 130-residue protein sequence, read N- to C-terminus: Mini-ribonuclease 3 (130 aa).

Aspartate 19 is an active-site residue. Residues 69–91 form a disordered region; the sequence is EQDVVRRGRNAKGHGAPKSADPA.

Belongs to the MrnC RNase family. In terms of assembly, homodimer. The cofactor is Mg(2+).

It localises to the cytoplasm. Involved in correct processing of both the 5' and 3' ends of 23S rRNA precursor. Processes 30S rRNA precursor transcript even in absence of ribonuclease 3 (Rnc); Rnc processes 30S rRNA into smaller rRNA precursors. The protein is Mini-ribonuclease 3 of Symbiobacterium thermophilum (strain DSM 24528 / JCM 14929 / IAM 14863 / T).